Here is a 192-residue protein sequence, read N- to C-terminus: Segregation and condensation protein B (192 aa).

The protein belongs to the ScpB family. Homodimer. Homodimerization may be required to stabilize the binding of ScpA to the Smc head domains. Component of a cohesin-like complex composed of ScpA, ScpB and the Smc homodimer, in which ScpA and ScpB bind to the head domain of Smc. The presence of the three proteins is required for the association of the complex with DNA.

The protein localises to the cytoplasm. In terms of biological role, participates in chromosomal partition during cell division. May act via the formation of a condensin-like complex containing Smc and ScpA that pull DNA away from mid-cell into both cell halves. This chain is Segregation and condensation protein B, found in Mycoplasma mobile (strain ATCC 43663 / 163K / NCTC 11711) (Mesomycoplasma mobile).